The following is a 92-amino-acid chain: Small ribosomal subunit protein uS19 (92 aa).

Belongs to the universal ribosomal protein uS19 family.

Its function is as follows. Protein S19 forms a complex with S13 that binds strongly to the 16S ribosomal RNA. This is Small ribosomal subunit protein uS19 from Vibrio parahaemolyticus serotype O3:K6 (strain RIMD 2210633).